The following is a 185-amino-acid chain: Large ribosomal subunit protein uL5 (185 aa).

The protein belongs to the universal ribosomal protein uL5 family. As to quaternary structure, part of the 50S ribosomal subunit; part of the 5S rRNA/L5/L18/L25 subcomplex. Contacts the 5S rRNA and the P site tRNA. Forms a bridge to the 30S subunit in the 70S ribosome.

Its function is as follows. This is one of the proteins that bind and probably mediate the attachment of the 5S RNA into the large ribosomal subunit, where it forms part of the central protuberance. In the 70S ribosome it contacts protein S13 of the 30S subunit (bridge B1b), connecting the 2 subunits; this bridge is implicated in subunit movement. Contacts the P site tRNA; the 5S rRNA and some of its associated proteins might help stabilize positioning of ribosome-bound tRNAs. This chain is Large ribosomal subunit protein uL5, found in Caulobacter sp. (strain K31).